Here is a 594-residue protein sequence, read N- to C-terminus: Invasin CotH2 (594 aa).

Residues 1-19 (MKLSLTIVSSSFLVAIAHA) form the signal peptide. N-linked (GlcNAc...) asparagine glycosylation is found at asparagine 77, asparagine 162, asparagine 226, asparagine 316, asparagine 441, asparagine 519, and asparagine 533. The disordered stretch occupies residues 529–565 (PPAANGTATSTNDGGNTHTAAGESKPASSSESSGSKI). Polar residues predominate over residues 534-547 (GTATSTNDGGNTHT). Positions 548–565 (AAGESKPASSSESSGSKI) are enriched in low complexity. Residue serine 571 is the site of GPI-anchor amidated serine attachment. The propeptide at 572-594 (GASRSAVSTVLLGVTALVATAIF) is removed in mature form.

As to quaternary structure, interacts with host epithelial cell surface HSPA5/BiP protein.

The protein localises to the cell membrane. Promotes invasion of host epithelial cells by adhering to receptors on the host cell surface to facilitate endocytosis of the pathogen into host cells. Binds HSPA5/BiP protein on the cell surface of host epithelial cells. The protein is Invasin CotH2 of Rhizopus delemar (strain RA 99-880 / ATCC MYA-4621 / FGSC 9543 / NRRL 43880) (Mucormycosis agent).